The primary structure comprises 597 residues: Lysine--tRNA ligase (597 aa).

Glutamate 501 and glutamate 508 together coordinate Mg(2+).

Belongs to the class-II aminoacyl-tRNA synthetase family. As to quaternary structure, homodimer. The cofactor is Mg(2+).

The protein localises to the cytoplasm. The enzyme catalyses tRNA(Lys) + L-lysine + ATP = L-lysyl-tRNA(Lys) + AMP + diphosphate. This Aquifex aeolicus (strain VF5) protein is Lysine--tRNA ligase (lysS).